A 410-amino-acid polypeptide reads, in one-letter code: Elongation factor Tu, chloroplastic (410 aa).

The tr-type G domain occupies 10-213 (KPHLNIGTIG…TVDEYIPTPK (204 aa)). The G1 stretch occupies residues 19-26 (GHVDHGKT). Residue 19-26 (GHVDHGKT) coordinates GTP. Residue threonine 26 participates in Mg(2+) binding. The segment at 60–64 (GITIN) is G2. The tract at residues 81 to 84 (DCPG) is G3. GTP contacts are provided by residues 81-85 (DCPGH) and 136-139 (NKAD). The tract at residues 136-139 (NKAD) is G4. A G5 region spans residues 174–176 (SAI).

It belongs to the TRAFAC class translation factor GTPase superfamily. Classic translation factor GTPase family. EF-Tu/EF-1A subfamily.

The protein resides in the plastid. The protein localises to the chloroplast. It catalyses the reaction GTP + H2O = GDP + phosphate + H(+). Functionally, GTP hydrolase that promotes the GTP-dependent binding of aminoacyl-tRNA to the A-site of ribosomes during protein biosynthesis. The polypeptide is Elongation factor Tu, chloroplastic (tufA) (Codium fragile (Dead man's fingers)).